Here is a 198-residue protein sequence, read N- to C-terminus: Na(+)-translocating NADH-quinone reductase subunit E (198 aa).

6 consecutive transmembrane segments (helical) span residues 11–31, 35–55, 77–97, 110–130, 140–160, and 176–196; these read SVFI…FLAV, VSTA…AVPA, FLNF…LEMI, GIFL…SFMV, VVYG…LAGL, and LGIT…FSGI.

This sequence belongs to the NqrDE/RnfAE family. In terms of assembly, composed of six subunits; NqrA, NqrB, NqrC, NqrD, NqrE and NqrF.

The protein resides in the cell inner membrane. The enzyme catalyses a ubiquinone + n Na(+)(in) + NADH + H(+) = a ubiquinol + n Na(+)(out) + NAD(+). Its function is as follows. NQR complex catalyzes the reduction of ubiquinone-1 to ubiquinol by two successive reactions, coupled with the transport of Na(+) ions from the cytoplasm to the periplasm. NqrA to NqrE are probably involved in the second step, the conversion of ubisemiquinone to ubiquinol. The protein is Na(+)-translocating NADH-quinone reductase subunit E of Actinobacillus pleuropneumoniae serotype 5b (strain L20).